We begin with the raw amino-acid sequence, 337 residues long: Pyrophosphate--fructose 6-phosphate 1-phosphotransferase (337 aa).

Diphosphate is bound at residue G10. D101 is a binding site for Mg(2+). Residues 124–126 (TID), R161, 168–170 (MGR), E220, R257, and 263–266 (HTIR) contribute to the substrate site. Catalysis depends on D126, which acts as the Proton acceptor.

The protein belongs to the phosphofructokinase type A (PFKA) family. Mixed-substrate PFK group III subfamily. Homodimer or homotrimer. The cofactor is Mg(2+).

It is found in the cytoplasm. The enzyme catalyses beta-D-fructose 6-phosphate + diphosphate = beta-D-fructose 1,6-bisphosphate + phosphate + H(+). It participates in carbohydrate degradation; glycolysis; D-glyceraldehyde 3-phosphate and glycerone phosphate from D-glucose: step 3/4. Its activity is regulated as follows. Non-allosteric. Functionally, catalyzes the phosphorylation of D-fructose 6-phosphate, the first committing step of glycolysis. Uses inorganic phosphate (PPi) as phosphoryl donor instead of ATP like common ATP-dependent phosphofructokinases (ATP-PFKs), which renders the reaction reversible, and can thus function both in glycolysis and gluconeogenesis. Consistently, PPi-PFK can replace the enzymes of both the forward (ATP-PFK) and reverse (fructose-bisphosphatase (FBPase)) reactions. The sequence is that of Pyrophosphate--fructose 6-phosphate 1-phosphotransferase from Thermoproteus tenax (strain ATCC 35583 / DSM 2078 / JCM 9277 / NBRC 100435 / Kra 1).